The chain runs to 357 residues: Histidine biosynthesis bifunctional protein HisB (357 aa).

Residues 1–167 form a histidinol-phosphatase region; it reads MNDKILFIDR…IHKYLMQNSH (167 aa). D9 acts as the Nucleophile in catalysis. Residues D9 and D11 each coordinate Mg(2+). D11 serves as the catalytic Proton donor. The Zn(2+) site is built by C93, H95, C101, and C103. Mg(2+) is bound at residue D130. The tract at residues 168–357 is imidazoleglycerol-phosphate dehydratase; sequence RVAHIQRITN…QIPSSKGILL (190 aa).

This sequence in the N-terminal section; belongs to the histidinol-phosphatase family. In the C-terminal section; belongs to the imidazoleglycerol-phosphate dehydratase family. It depends on Mg(2+) as a cofactor. Zn(2+) is required as a cofactor.

The protein resides in the cytoplasm. It catalyses the reaction D-erythro-1-(imidazol-4-yl)glycerol 3-phosphate = 3-(imidazol-4-yl)-2-oxopropyl phosphate + H2O. The catalysed reaction is L-histidinol phosphate + H2O = L-histidinol + phosphate. The protein operates within amino-acid biosynthesis; L-histidine biosynthesis; L-histidine from 5-phospho-alpha-D-ribose 1-diphosphate: step 6/9. Its pathway is amino-acid biosynthesis; L-histidine biosynthesis; L-histidine from 5-phospho-alpha-D-ribose 1-diphosphate: step 8/9. The sequence is that of Histidine biosynthesis bifunctional protein HisB from Blochmanniella floridana.